The sequence spans 508 residues: Lysine--tRNA ligase (508 aa).

2 residues coordinate Mg(2+): Glu-418 and Glu-425.

It belongs to the class-II aminoacyl-tRNA synthetase family. In terms of assembly, homodimer. The cofactor is Mg(2+).

The protein resides in the cytoplasm. It catalyses the reaction tRNA(Lys) + L-lysine + ATP = L-lysyl-tRNA(Lys) + AMP + diphosphate. The sequence is that of Lysine--tRNA ligase from Burkholderia pseudomallei (strain K96243).